The primary structure comprises 75 residues: Cytochrome c oxidase subunit 6C (75 aa).

The Mitochondrial matrix portion of the chain corresponds to 1–13 (MAPEVLPKPRMRG). A helical membrane pass occupies residues 14–54 (LLARRLRNHMAVAFVLSLGVAALYKFRVADQRKKAYADFYR). Residues 55–75 (NYDVMKDFEEMRKAGIFQSVK) lie on the Mitochondrial intermembrane side of the membrane.

It belongs to the cytochrome c oxidase subunit 6c family. Component of the cytochrome c oxidase (complex IV, CIV), a multisubunit enzyme composed of 14 subunits. The complex is composed of a catalytic core of 3 subunits MT-CO1, MT-CO2 and MT-CO3, encoded in the mitochondrial DNA, and 11 supernumerary subunits COX4I1 (or COX4I2), COX5A, COX5B, COX6A1 (or COX6A2), COX6B1 (or COX6B2), COX6C, COX7A2 (or COX7A1), COX7B, COX7C, COX8A and NDUFA4, which are encoded in the nuclear genome. The complex exists as a monomer or a dimer and forms supercomplexes (SCs) in the inner mitochondrial membrane with NADH-ubiquinone oxidoreductase (complex I, CI) and ubiquinol-cytochrome c oxidoreductase (cytochrome b-c1 complex, complex III, CIII), resulting in different assemblies (supercomplex SCI(1)III(2)IV(1) and megacomplex MCI(2)III(2)IV(2)).

It is found in the mitochondrion inner membrane. The protein operates within energy metabolism; oxidative phosphorylation. Component of the cytochrome c oxidase, the last enzyme in the mitochondrial electron transport chain which drives oxidative phosphorylation. The respiratory chain contains 3 multisubunit complexes succinate dehydrogenase (complex II, CII), ubiquinol-cytochrome c oxidoreductase (cytochrome b-c1 complex, complex III, CIII) and cytochrome c oxidase (complex IV, CIV), that cooperate to transfer electrons derived from NADH and succinate to molecular oxygen, creating an electrochemical gradient over the inner membrane that drives transmembrane transport and the ATP synthase. Cytochrome c oxidase is the component of the respiratory chain that catalyzes the reduction of oxygen to water. Electrons originating from reduced cytochrome c in the intermembrane space (IMS) are transferred via the dinuclear copper A center (CU(A)) of subunit 2 and heme A of subunit 1 to the active site in subunit 1, a binuclear center (BNC) formed by heme A3 and copper B (CU(B)). The BNC reduces molecular oxygen to 2 water molecules using 4 electrons from cytochrome c in the IMS and 4 protons from the mitochondrial matrix. The protein is Cytochrome c oxidase subunit 6C (COX6C) of Homo sapiens (Human).